Consider the following 208-residue polypeptide: Thymidylate kinase (208 aa).

10 to 17 (GPEGSGKT) provides a ligand contact to ATP.

It belongs to the thymidylate kinase family.

The enzyme catalyses dTMP + ATP = dTDP + ADP. Its function is as follows. Phosphorylation of dTMP to form dTDP in both de novo and salvage pathways of dTTP synthesis. The sequence is that of Thymidylate kinase from Bacillus cereus (strain ATCC 14579 / DSM 31 / CCUG 7414 / JCM 2152 / NBRC 15305 / NCIMB 9373 / NCTC 2599 / NRRL B-3711).